We begin with the raw amino-acid sequence, 407 residues long: 1-deoxy-D-xylulose 5-phosphate reductoisomerase (407 aa).

Residues Thr-25, Gly-26, Ser-27, Ile-28, Asn-53, and Asn-136 each contribute to the NADPH site. Residue Lys-137 participates in 1-deoxy-D-xylulose 5-phosphate binding. Position 138 (Glu-138) interacts with NADPH. Residue Asp-162 coordinates Mn(2+). 1-deoxy-D-xylulose 5-phosphate contacts are provided by Ser-163, Glu-164, Ser-188, and His-211. A Mn(2+)-binding site is contributed by Glu-164. NADPH is bound at residue Gly-217. 1-deoxy-D-xylulose 5-phosphate is bound by residues Ser-224, Asn-229, Lys-230, and Glu-233. Residue Glu-233 participates in Mn(2+) binding.

It belongs to the DXR family. Requires Mg(2+) as cofactor. Mn(2+) serves as cofactor.

It carries out the reaction 2-C-methyl-D-erythritol 4-phosphate + NADP(+) = 1-deoxy-D-xylulose 5-phosphate + NADPH + H(+). The protein operates within isoprenoid biosynthesis; isopentenyl diphosphate biosynthesis via DXP pathway; isopentenyl diphosphate from 1-deoxy-D-xylulose 5-phosphate: step 1/6. Its function is as follows. Catalyzes the NADPH-dependent rearrangement and reduction of 1-deoxy-D-xylulose-5-phosphate (DXP) to 2-C-methyl-D-erythritol 4-phosphate (MEP). This Nitrobacter winogradskyi (strain ATCC 25391 / DSM 10237 / CIP 104748 / NCIMB 11846 / Nb-255) protein is 1-deoxy-D-xylulose 5-phosphate reductoisomerase.